The primary structure comprises 67 residues: DNA-directed RNA polymerase subunit omega (67 aa).

This sequence belongs to the RNA polymerase subunit omega family. The RNAP catalytic core consists of 2 alpha, 1 beta, 1 beta' and 1 omega subunit. When a sigma factor is associated with the core the holoenzyme is formed, which can initiate transcription.

The catalysed reaction is RNA(n) + a ribonucleoside 5'-triphosphate = RNA(n+1) + diphosphate. In terms of biological role, promotes RNA polymerase assembly. Latches the N- and C-terminal regions of the beta' subunit thereby facilitating its interaction with the beta and alpha subunits. This chain is DNA-directed RNA polymerase subunit omega, found in Burkholderia pseudomallei (strain 1106a).